We begin with the raw amino-acid sequence, 517 residues long: GMP synthase [glutamine-hydrolyzing] (517 aa).

The Glutamine amidotransferase type-1 domain occupies 11–202; that stretch reads KIIVLDFGSQ…AFNVCDAKAN (192 aa). C88 serves as the catalytic Nucleophile. Residues H176 and E178 contribute to the active site. One can recognise a GMPS ATP-PPase domain in the interval 203-392; sequence WTMDDFIEMQ…LGIPHDLVWR (190 aa). 230 to 236 provides a ligand contact to ATP; it reads SGGVDSS.

As to quaternary structure, homodimer.

It catalyses the reaction XMP + L-glutamine + ATP + H2O = GMP + L-glutamate + AMP + diphosphate + 2 H(+). It participates in purine metabolism; GMP biosynthesis; GMP from XMP (L-Gln route): step 1/1. In terms of biological role, catalyzes the synthesis of GMP from XMP. The polypeptide is GMP synthase [glutamine-hydrolyzing] (Lactobacillus gasseri (strain ATCC 33323 / DSM 20243 / BCRC 14619 / CIP 102991 / JCM 1131 / KCTC 3163 / NCIMB 11718 / NCTC 13722 / AM63)).